A 468-amino-acid polypeptide reads, in one-letter code: ATP synthase subunit beta 1 (468 aa).

155–162 (GGAGVGKT) lines the ATP pocket.

The protein belongs to the ATPase alpha/beta chains family. In terms of assembly, F-type ATPases have 2 components, CF(1) - the catalytic core - and CF(0) - the membrane proton channel. CF(1) has five subunits: alpha(3), beta(3), gamma(1), delta(1), epsilon(1). CF(0) has three main subunits: a(1), b(2) and c(9-12). The alpha and beta chains form an alternating ring which encloses part of the gamma chain. CF(1) is attached to CF(0) by a central stalk formed by the gamma and epsilon chains, while a peripheral stalk is formed by the delta and b chains.

Its subcellular location is the cell inner membrane. The enzyme catalyses ATP + H2O + 4 H(+)(in) = ADP + phosphate + 5 H(+)(out). Produces ATP from ADP in the presence of a proton gradient across the membrane. The catalytic sites are hosted primarily by the beta subunits. This Syntrophotalea carbinolica (strain DSM 2380 / NBRC 103641 / GraBd1) (Pelobacter carbinolicus) protein is ATP synthase subunit beta 1.